Consider the following 255-residue polypeptide: 5'-nucleotidase SurE (255 aa).

A divalent metal cation is bound by residues Asp-8, Asp-9, Ser-39, and Asn-91.

This sequence belongs to the SurE nucleotidase family. The cofactor is a divalent metal cation.

It is found in the cytoplasm. It catalyses the reaction a ribonucleoside 5'-phosphate + H2O = a ribonucleoside + phosphate. Its function is as follows. Nucleotidase that shows phosphatase activity on nucleoside 5'-monophosphates. This chain is 5'-nucleotidase SurE, found in Acinetobacter baumannii (strain AB0057).